Consider the following 423-residue polypeptide: Protein disulfide isomerase-like 5-2 (423 aa).

The first 35 residues, 1 to 35, serve as a signal peptide directing secretion; sequence MAATTTRPLPLLLLLLLPPLLLLLLSFHAAAAAAA. The Thioredoxin domain occupies 36–149; the sequence is EEFPRDGRVI…LVRNLNKFVA (114 aa). Catalysis depends on nucleophile residues Cys71 and Cys74. The cysteines at positions 71 and 74 are disulfide-linked. Asn181 is a glycosylation site (N-linked (GlcNAc...) asparagine). Residues 386-406 traverse the membrane as a helical segment; the sequence is LVSLNSLYILICVFALLGVMI.

The protein belongs to the protein disulfide isomerase family.

The protein localises to the membrane. Its function is as follows. Acts as a protein-folding catalyst that interacts with nascent polypeptides to catalyze the formation, isomerization, and reduction or oxidation of disulfide bonds. May play a role in storage protein biogenesis. This Oryza sativa subsp. japonica (Rice) protein is Protein disulfide isomerase-like 5-2 (PDIL5-2).